A 1020-amino-acid polypeptide reads, in one-letter code: MREPEELMPDSGAVFTFGKSKFAENNPGKFWFKNDVPVHLSCGDEHSAVVTGNNKLYMFGSNNWGQLGLGSKSAISKPTCVKALKPEKVKLAACGRNHTLVSTEGGNVYATGGNNEGQLGLGDTEERNTFHVISFFTSEHKIKQLSAGSNTSAALTEDGRLFMWGDNSEGQIGLKNVSNVCVPQQVTIGKPVSWISCGYYHSAFVTTDGELYVFGEPENGKLGLPNQLLGNHRTPQLVSEIPEKVIQVACGGEHTVVLTENAVYTFGLGQFGQLGLGTFLFETSEPKVIENIRDQTISYISCGENHTALITDIGLMYTFGDGRHGKLGLGLENFTNHFIPTLCSNFLRFIVKLVACGGCHMVVFAAPHRGVAKEIEFDEINDTCLSVATFLPYSSLTSGNVLQRTLSARMRRRERERSPDSFSMRRTLPPIEGTLGLSACFLPNSVFPRCSERNLQESVLSEQDLMQPEEPDYLLDEMTKEAEIDNSSTVESLGETTDILNMTHIMSLNSNEKSLKLSPVQKQKKQQTIGELTQDTALTENDDSDEYEEMSEMKEGKACKQHVSQGIFMTQPATTIEAFSDEEVGNDTGQVGPQADTDGEGLQKEVYRHENNNGVDQLDAKEIEKESDGGHSQKESEAEEIDSEKETKLAEIAGMKDLREREKSTKKMSPFFGNLPDRGMNTESEENKDFVKKRESCKQDVIFDSERESVEKPDSYMEGASESQQGIADGFQQPEAIEFSSGEKEDDEVETDQNIRYGRKLIEQGNEKETKPIISKSMAKYDFKCDRLSEIPEEKEGAEDSKGNGIEEQEVEANEENVKVHGGRKEKTEILSDDLTDKAEDHEFSKTEELKLEDVDEEINAENVESKKKTVGDDESVPTGYHSKTEGAERTNDDSSAETIEKKEKANLEERAICEYNENPKGYMLDDADSSSLEILENSETTPSKDMKKTKKIFLFKRVPSINQKIVKNNNEPLPEIKSIGDQIILKSDNKDADQNHMSQNHQNIPPTNTERRSKSCTIL.

RCC1 repeat units lie at residues 54–105, 106–158, 159–208, 209–261, 262–313, and 314–367; these read NKLY…STEG, GNVY…LTED, GRLF…VTTD, GELY…LTEN, AVYT…ITDI, and GLMY…FAAP. Residues serine 418 and serine 518 each carry the phosphoserine modification. Disordered stretches follow at residues 609–776, 790–906, and 989–1020; these read HENN…IISK, EIPE…KEKA, and DNKDADQNHMSQNHQNIPPTNTERRSKSCTIL. Basic and acidic residues-rich tracts occupy residues 618-636, 644-665, 685-698, 704-715, 760-771, 790-802, 816-853, and 883-906; these read LDAKEIEKESDGGHSQKES, EKETKLAEIAGMKDLREREKST, EENKDFVKKRESCK, DSERESVEKPDS, KLIEQGNEKETK, EIPEEKEGAEDSK, ENVKVHGGRKEKTEILSDDLTDKAEDHEFSKTEELKLE, and SKTEGAERTNDDSSAETIEKKEKA. Over residues 996–1009 the composition is skewed to polar residues; it reads NHMSQNHQNIPPTN. The residue at position 1017 (cysteine 1017) is a Cysteine methyl ester. Cysteine 1017 is lipidated: S-geranylgeranyl cysteine. Positions 1018–1020 are cleaved as a propeptide — removed in mature form; the sequence is TIL.

As to quaternary structure, interacts with SPATA7. Interacts with CEP290. Interacts with WHRN. Interacts with PDE6D. Interacts with RPGRIP1. Interacts with RPGRIP1L. PDE6D, RPGRIP1 and RPGRIP1L may compete for the same binding sites. Interacts with RAB37 and RAB8A (in GDP-bound forms); functions as GEF for RAB37 and RAB8A. Isoform 6 interacts with NPM1 (via C-terminus). Isoform 6 interacts with SMC1A and SMC3. Prenylated. Heart, brain, placenta, lung, liver, muscle, kidney, retina, pancreas and fetal retinal pigment epithelium. Isoform 3 is found only in the retina. Colocalizes with RPGRIP1 in the outer segment of rod photoreceptors and cone outer segments.

Its subcellular location is the cytoplasm. The protein localises to the cytoskeleton. The protein resides in the flagellum axoneme. It localises to the golgi apparatus. It is found in the cell projection. Its subcellular location is the cilium. The protein localises to the microtubule organizing center. The protein resides in the centrosome. It localises to the cilium basal body. It is found in the cilium axoneme. Its function is as follows. Acts as a guanine-nucleotide releasing factor (GEF) for RAB8A and RAB37 by promoting the conversion of inactive RAB-GDP to the active form RAB-GTP. GEF activity towards RAB8A may facilitate ciliary trafficking by modulating ciliary intracellular localization of RAB8A. GEF activity towards RAB37 maintains autophagic homeostasis and retinal function. Involved in photoreceptor integrity. May control cilia formation by regulating actin stress filaments and cell contractility. May be involved in microtubule organization and regulation of transport in primary cilia. May play a critical role in spermatogenesis and in intraflagellar transport processes. The polypeptide is X-linked retinitis pigmentosa GTPase regulator (Homo sapiens (Human)).